A 957-amino-acid polypeptide reads, in one-letter code: UvrABC system protein A (957 aa).

33 to 40 (GLSGSGKS) is an ATP binding site. Residues 252-279 (CPQCGFSIPELEPRMFSFNSPFGACPTC) form a C4-type zinc finger. ABC transporter domains follow at residues 309 to 587 (WEPI…AKSL) and 607 to 935 (PNGR…KYLR). 639 to 646 (GVSGSGKS) provides a ligand contact to ATP. The C4-type zinc-finger motif lies at 738-764 (CEACRGDGIIKIEMHFLPDVYVPCEVC).

It belongs to the ABC transporter superfamily. UvrA family. In terms of assembly, forms a heterotetramer with UvrB during the search for lesions.

Its subcellular location is the cytoplasm. Its function is as follows. The UvrABC repair system catalyzes the recognition and processing of DNA lesions. UvrA is an ATPase and a DNA-binding protein. A damage recognition complex composed of 2 UvrA and 2 UvrB subunits scans DNA for abnormalities. When the presence of a lesion has been verified by UvrB, the UvrA molecules dissociate. The chain is UvrABC system protein A from Halalkalibacterium halodurans (strain ATCC BAA-125 / DSM 18197 / FERM 7344 / JCM 9153 / C-125) (Bacillus halodurans).